The chain runs to 2321 residues: Neurogenic locus notch homolog protein 3 (2321 aa).

Over residues 1-14 the composition is skewed to basic residues; sequence MGPGARGRRRRRRP. Positions 1–26 are disordered; it reads MGPGARGRRRRRRPMSPPPPPPPVRA. The first 39 residues, 1 to 39, serve as a signal peptide directing secretion; the sequence is MGPGARGRRRRRRPMSPPPPPPPVRALPLLLLLAGPGAA. Residues 15-25 show a composition bias toward pro residues; that stretch reads MSPPPPPPPVR. 3 consecutive EGF-like domains span residues 40-77, 78-118, and 119-156; these read APPCLDGSPCANGGRCTQLPSREAACLCPPGWVGERCQ, LEDP…PDCS, and LPDPCLSSPCAHGARCSVGPDGRFLCSCPPGYQGRSCR. The Extracellular portion of the chain corresponds to 40 to 1643; that stretch reads APPCLDGSPC…LEPPEPSVPL (1604 aa). 99 cysteine pairs are disulfide-bonded: Cys-43-Cys-55, Cys-49-Cys-65, Cys-67-Cys-76, Cys-82-Cys-93, Cys-87-Cys-106, Cys-108-Cys-117, Cys-123-Cys-134, Cys-128-Cys-144, Cys-146-Cys-155, Cys-162-Cys-174, Cys-168-Cys-183, Cys-185-Cys-194, Cys-201-Cys-212, Cys-206-Cys-222, Cys-224-Cys-233, Cys-240-Cys-251, Cys-245-Cys-260, Cys-262-Cys-271, Cys-278-Cys-291, Cys-285-Cys-300, Cys-302-Cys-311, Cys-318-Cys-329, Cys-323-Cys-338, Cys-340-Cys-349, Cys-355-Cys-366, Cys-360-Cys-377, Cys-379-Cys-388, Cys-395-Cys-408, Cys-402-Cys-417, Cys-419-Cys-428, Cys-435-Cys-446, Cys-440-Cys-455, Cys-457-Cys-466, Cys-473-Cys-484, Cys-478-Cys-493, Cys-495-Cys-504, Cys-511-Cys-522, Cys-516-Cys-531, Cys-533-Cys-542, Cys-549-Cys-559, Cys-554-Cys-568, Cys-570-Cys-579, Cys-586-Cys-597, Cys-591-Cys-606, Cys-608-Cys-617, Cys-624-Cys-634, Cys-629-Cys-643, Cys-645-Cys-654, Cys-661-Cys-672, Cys-666-Cys-681, Cys-683-Cys-692, Cys-699-Cys-709, Cys-704-Cys-718, Cys-720-Cys-729, Cys-738-Cys-749, Cys-743-Cys-758, Cys-760-Cys-769, Cys-775-Cys-786, Cys-780-Cys-796, Cys-798-Cys-807, Cys-814-Cys-826, Cys-820-Cys-835, Cys-837-Cys-846, Cys-853-Cys-864, Cys-858-Cys-873, Cys-875-Cys-884, Cys-891-Cys-901, Cys-896-Cys-910, Cys-912-Cys-921, Cys-928-Cys-939, Cys-933-Cys-948, Cys-950-Cys-959, Cys-966-Cys-977, Cys-971-Cys-986, Cys-988-Cys-997, Cys-1004-Cys-1015, Cys-1009-Cys-1022, Cys-1024-Cys-1033, Cys-1040-Cys-1061, Cys-1055-Cys-1070, Cys-1072-Cys-1081, Cys-1088-Cys-1099, Cys-1093-Cys-1108, Cys-1110-Cys-1119, Cys-1126-Cys-1137, Cys-1131-Cys-1146, Cys-1148-Cys-1157, Cys-1164-Cys-1182, Cys-1176-Cys-1191, Cys-1193-Cys-1202, Cys-1209-Cys-1222, Cys-1214-Cys-1232, Cys-1234-Cys-1243, Cys-1250-Cys-1261, Cys-1255-Cys-1275, Cys-1277-Cys-1286, Cys-1293-Cys-1304, Cys-1298-Cys-1313, and Cys-1315-Cys-1324. An EGF-like 4; calcium-binding domain is found at 158 to 195; sequence DVDECRVGEPCRHGGTCLNTPGSFRCQCPAGYTGPLCE. The region spanning 197–234 is the EGF-like 5 domain; sequence PAVPCAPSPCRNGGTCRQSGDLTYDCACLPGFEGQNCE. The EGF-like 6; calcium-binding domain maps to 236-272; sequence NVDDCPGHRCLNGGTCVDGVNTYNCQCPPEWTGQFCT. Residues 274–312 form the EGF-like 7 domain; sequence DVDECQLQPNACHNGGTCFNTLGGHSCVCVNGWTGESCS. The region spanning 314–350 is the EGF-like 8; calcium-binding domain; that stretch reads NIDDCATAVCFHGATCHDRVASFYCACPMGKTGLLCH. Positions 351-389 constitute an EGF-like 9 domain; that stretch reads LDDACVSNPCHEDAICDTNPVNGRAICTCPPGFTGGACD. In terms of domain architecture, EGF-like 10; calcium-binding spans 391–429; it reads DVDECSIGANPCEHLGRCVNTQGSFLCQCGRGYTGPRCE. The EGF-like 11; calcium-binding domain maps to 431–467; that stretch reads DVNECLSGPCRNQATCLDRIGQFTCICMAGFTGTYCE. One can recognise an EGF-like 12; calcium-binding domain in the interval 469–505; sequence DIDECQSSPCVNGGVCKDRVNGFSCTCPSGFSGSTCQ. The region spanning 507–543 is the EGF-like 13; calcium-binding domain; that stretch reads DVDECASTPCRNGAKCVDQPDGYECRCAEGFEGTLCD. Positions 545 to 580 constitute an EGF-like 14; calcium-binding domain; sequence NVDDCSPDPCHHGRCVDGIASFSCACAPGYTGTRCE. An EGF-like 15; calcium-binding domain is found at 582–618; the sequence is QVDECRSQPCRHGGKCLDLVDKYLCRCPSGTTGVNCE. Residues 620–655 enclose the EGF-like 16; calcium-binding domain; sequence NIDDCASNPCTFGVCRDGINRYDCVCQPGFTGPLCN. The EGF-like 17; calcium-binding domain maps to 657-693; sequence EINECASSPCGEGGSCVDGENGFRCLCPPGSLPPLCL. 3 consecutive EGF-like domains span residues 695 to 730, 734 to 770, and 771 to 808; these read PSHPCAHEPCSHGICYDAPGGFRCVCEPGWSGPRCS, ARDACESQPCRAGGTCSSDGMGFHCTCPPGVQGRQCE, and LLSPCTPNPCEHGGRCESAPGQLPVCSCPQGWQGPRCQ. Residues 810 to 847 form the EGF-like 21; calcium-binding domain; it reads DVDECAGPAPCGPHGICTNLAGSFSCTCHGGYTGPSCD. Residues 849–885 enclose the EGF-like 22; calcium-binding domain; the sequence is DINDCDPNPCLNGGSCQDGVGSFSCSCLPGFAGPRCA. The EGF-like 23; calcium-binding domain maps to 887 to 922; that stretch reads DVDECLSNPCGPGTCTDHVASFTCTCPPGYGGFHCE. EGF-like domains are found at residues 924-960, 962-998, 1000-1034, 1036-1082, and 1084-1120; these read DLPDCSPSSCFNGGTCVDGVNSFSCLCRPGYTGAHCQ, EADPCLSRPCLHGGVCSAAHPGFRCTCLESFTGPQCQ, LVDWCSRQPCQNGGRCVQTGAYCLCPPGWSGRLCD, RSLP…SHCE, and EVDPCLAQPCQHGGTCRGYMGGYMCECLPGYNGDNCE. The 37-residue stretch at 1122-1158 folds into the EGF-like 29; calcium-binding domain; it reads DVDECASQPCQHGGSCIDLVARYLCSCPPGTLGVLCE. The EGF-like 30; calcium-binding domain maps to 1160-1203; that stretch reads NEDDCGPGPPLDSGPRCLHNGTCVDLVGGFRCTCPPGYTGLRCE. The N-linked (GlcNAc...) asparagine glycan is linked to Asn-1179. EGF-like domains follow at residues 1205–1244, 1246–1287, 1289–1325, and 1335–1373; these read DINECRSGACHAAHTRDCLQDPGGGFRCLCHAGFSGPRCQ, VLSP…PRCE, VARSCRELQCPVGVPCQQTPRGPRCACPPGLSGPSCR, and SNASCAAAPCLHGGSCRPAPLAPFFRCACAQGWTGPRCE. Residue Asn-1336 is glycosylated (N-linked (GlcNAc...) asparagine). Disulfide bonds link Cys-1339-Cys-1350, Cys-1344-Cys-1361, Cys-1363-Cys-1372, Cys-1387-Cys-1410, Cys-1392-Cys-1405, Cys-1401-Cys-1417, Cys-1428-Cys-1451, Cys-1433-Cys-1446, Cys-1442-Cys-1458, Cys-1467-Cys-1493, Cys-1475-Cys-1488, and Cys-1484-Cys-1500. LNR repeat units lie at residues 1387 to 1427, 1428 to 1458, and 1467 to 1505; these read CPRA…PWRQ, CEALQCWRLFNNSRCDPACSSPACLYDNFDC, and CNPVYEKYCADHFADGRCDQGCNTEECGWDGLDCASEVP. N-linked (GlcNAc...) asparagine glycosylation is present at Asn-1438. Residues 1644–1664 traverse the membrane as a helical segment; that stretch reads LPLLVAGAVLLLVILVLGVMV. The Cytoplasmic portion of the chain corresponds to 1665-2321; sequence ARRKREHSTL…EVTPKRQVLA (657 aa). ANK repeat units follow at residues 1838–1867, 1871–1901, 1905–1934, 1938–1967, and 1971–2000; these read TGETALHLAARYARADAAKRLLDAGADTNA, SGRTPLHTAVTADAQGVFQILIRNRSTDLDA, DGSTALILAARLAVEGMVEELIASHADVNA, LGKSALHWAAAVNNVEATLALLKNGANKDM, and KEETPLFLAAREGSYEAAKLLLDHFANREI. Residues 2024 to 2120 are disordered; that stretch reads LDQPSGPRSP…FGGPPASPGG (97 aa). Residues 2039 to 2053 are compositionally biased toward low complexity; that stretch reads LGPLLCPPGAFLPGL. Arg-2174 carries the omega-N-methylarginine modification. The disordered stretch occupies residues 2190–2321; it reads APGPQLLNPG…EVTPKRQVLA (132 aa). Low complexity predominate over residues 2269–2289; it reads STPSPATATGAMATTTGALPA. Positions 2296–2308 are enriched in polar residues; it reads VPSSLAQAQTQLG.

It belongs to the NOTCH family. In terms of assembly, heterodimer of a C-terminal fragment N(TM) and a N-terminal fragment N(EC) which are probably linked by disulfide bonds. Interacts with MAML1, MAML2 and MAML3 which act as transcriptional coactivators for NOTCH3. Interacts with PSMA1. Interacts with HIF1AN. Post-translationally, synthesized in the endoplasmic reticulum as an inactive form which is proteolytically cleaved by a furin-like convertase in the trans-Golgi network before it reaches the plasma membrane to yield an active, ligand-accessible form. Cleavage results in a C-terminal fragment N(TM) and a N-terminal fragment N(EC). Following ligand binding, it is cleaved by TNF-alpha converting enzyme (TACE) to yield a membrane-associated intermediate fragment called notch extracellular truncation (NEXT). This fragment is then cleaved by presenilin dependent gamma-secretase to release a notch-derived peptide containing the intracellular domain (NICD) from the membrane. In terms of processing, phosphorylated. Hydroxylated by HIF1AN. As to expression, ubiquitously expressed in fetal and adult tissues.

It is found in the cell membrane. Its subcellular location is the nucleus. Its function is as follows. Functions as a receptor for membrane-bound ligands Jagged1, Jagged2 and Delta1 to regulate cell-fate determination. Upon ligand activation through the released notch intracellular domain (NICD) it forms a transcriptional activator complex with RBPJ/RBPSUH and activates genes of the enhancer of split locus. Affects the implementation of differentiation, proliferation and apoptotic programs. This chain is Neurogenic locus notch homolog protein 3 (NOTCH3), found in Homo sapiens (Human).